The chain runs to 484 residues: Tribbles (484 aa).

Residues methionine 1–tyrosine 23 show a composition bias toward polar residues. The tract at residues methionine 1–glutamate 51 is disordered. The span at serine 24–serine 49 shows a compositional bias: low complexity. The Protein kinase domain maps to tyrosine 129–leucine 397. 2 stretches are compositionally biased toward acidic residues: residues alanine 420–glycine 437 and proline 475–glycine 484. Disordered stretches follow at residues alanine 420 to aspartate 443 and methionine 464 to glycine 484.

This sequence belongs to the protein kinase superfamily. CAMK Ser/Thr protein kinase family. Tribbles subfamily. As to quaternary structure, interacts with slbo. Interacts with Akt1. In terms of tissue distribution, expressed throughout the brain with highest levels of expression detected in the cell body rind and lower levels of expression detected in the neurophil (at protein level).

It is found in the nucleus. The protein resides in the cytoplasm. It localises to the cell cortex. In terms of biological role, adapter protein that negatively regulates different signaling pathways to coordinate cell differentiation, proliferation, migration and growth. Functions by binding to key regulatory proteins and either blocks their activity or regulates their turnover by the proteasome. In various developing tissues functions as a cell cycle regulator that mediates cell proliferation according to the requirements of the developmental program. Acts by inducing the proteasomal degradation of the CD25 mitotic activators stg and twe at critical stages of development to delay entry into mitosis and thus mediate cell proliferation. During gastrulation, negatively regulates stg to delay mitosis in the ventral region of the embryonic mesoderm thus allowing invagination to be completed before cell division takes place. Delaying stg-dependent mitosis during bristle development and in migrating germline pole cells also arrests their cell divisions, whereas in cystocytes it promotes their cell divisions. Involved in the regulation of the mid-blastula transition; promotes the destruction of twe resulting in the cell cycle arrest in G2 of cycle 14 which delays mitosis and thus reduces cell proliferation allowing cell fate specification and morphogenesis to take place. In germline cells, blocks border cell migration during oogenesis by binding to slbo/C/EBP and promoting its ubiquitination and degradation by the proteasome. May function in a negative feedback loop with slbo to coordinate proper border cell migration. During tissue growth negatively regulates insulin signaling by binding to Akt1 and blocking its phosphorylation-dependent activation. However it may also function downstream in the insulin signaling pathway, acting with Akt1 to direct foxo degradation. Essential for the proper formation of operant place and aversive olfactory memories. The sequence is that of Tribbles from Drosophila melanogaster (Fruit fly).